A 22-amino-acid chain; its full sequence is Hemoglobinase-like protein 2 (22 aa).

Belongs to the peptidase C13 family.

The catalysed reaction is Hydrolysis of proteins and small molecule substrates at -Asn-|-Xaa- bonds.. This Fasciola hepatica (Liver fluke) protein is Hemoglobinase-like protein 2.